The sequence spans 1312 residues: AT-rich interactive domain-containing protein 4B (1312 aa).

Disordered stretches follow at residues P124–R166 and K266–P306. A phosphoserine mark is found at S276, S295, and S296. The segment covering E277–F305 has biased composition (acidic residues). The ARID domain occupies P306 to R398. Residues K429, K440, and K462 each participate in a glycyl lysine isopeptide (Lys-Gly) (interchain with G-Cter in SUMO2) cross-link. Disordered stretches follow at residues E458–V577, I635–S680, Q708–F894, L909–P1212, and S1252–A1288. The tract at residues I465–K473 is antigenic epitope. Residue S483 is modified to Phosphoserine. Residues S483 to D496 are compositionally biased toward basic and acidic residues. K517 is covalently cross-linked (Glycyl lysine isopeptide (Lys-Gly) (interchain with G-Cter in SUMO2)). Residues N532–E567 show a composition bias toward acidic residues. In terms of domain architecture, Tudor-knot spans G572–I624. Residues N643–S656 show a composition bias toward basic and acidic residues. Residues S666, S675, and S717 each carry the phosphoserine modification. Composition is skewed to basic and acidic residues over residues E722–Q754 and S778–E787. Residues M728 to Q754 adopt a coiled-coil conformation. Residue K751 forms a Glycyl lysine isopeptide (Lys-Gly) (interchain with G-Cter in SUMO2) linkage. Residues S778 and S790 each carry the phosphoserine modification. Acidic residues predominate over residues V788–E799. The residue at position 793 (T793) is a Phosphothreonine. Composition is skewed to basic and acidic residues over residues V807–S816, C828–L852, L909–V927, and K995–E1010. S1014 is modified (phosphoserine). T1026 carries the post-translational modification Phosphothreonine. Residues E1028–E1037 show a composition bias toward low complexity. Position 1029 is a phosphoserine (S1029). Residues G1038–V1047 are compositionally biased toward polar residues. Positions E1056–T1065 are enriched in basic and acidic residues. Low complexity predominate over residues S1087 to S1101. Residues K1130–K1137 form an antigenic epitope region. Residues K1130–K1148 are compositionally biased toward basic residues. At T1150 the chain carries Phosphothreonine. A phosphoserine mark is found at S1152, S1153, S1155, and S1159. Over residues E1162–P1191 the composition is skewed to polar residues. A compositionally biased stretch (basic and acidic residues) spans K1196–S1208. Positions E1231 to E1270 form a coiled coil. The span at A1272–A1288 shows a compositional bias: low complexity.

Component of a Sin3A corepressor complex consisting of SIN3A, SAP130, SUDS3/SAP45, SAP180, HDAC1 and HDAC2. Interacts with ARID4A. Interacts with AR. As to expression, highly expressed in the testis and in breast, lung, colon, pancreatic and ovarian cancers. Expressed at low levels in the thymus, prostate and ovary.

The protein resides in the nucleus. It localises to the cytoplasm. Its function is as follows. Acts as a transcriptional repressor. May function in the assembly and/or enzymatic activity of the Sin3A corepressor complex or in mediating interactions between the complex and other regulatory complexes. Plays a role in the regulation of epigenetic modifications at the PWS/AS imprinting center near the SNRPN promoter, where it might function as part of a complex with RB1 and ARID4A. Involved in spermatogenesis, together with ARID4A, where it functions as a transcriptional coactivator for AR (androgen receptor) and enhances expression of genes required for sperm maturation. Regulates expression of the tight junction protein CLDN3 in the testis, which is important for integrity of the blood-testis barrier. Plays a role in myeloid homeostasis where it regulates the histone methylation state of bone marrow cells and expression of various genes involved in hematopoiesis. May function as a leukemia suppressor. This Homo sapiens (Human) protein is AT-rich interactive domain-containing protein 4B (ARID4B).